We begin with the raw amino-acid sequence, 601 residues long: Elongation factor 4 (601 aa).

One can recognise a tr-type G domain in the interval 8-189 (EQIRNFGIIA…LIVRKAPPPK (182 aa)). 20-25 (DHGKST) serves as a coordination point for GTP.

Belongs to the TRAFAC class translation factor GTPase superfamily. Classic translation factor GTPase family. LepA subfamily.

Its subcellular location is the cell membrane. It carries out the reaction GTP + H2O = GDP + phosphate + H(+). In terms of biological role, required for accurate and efficient protein synthesis under certain stress conditions. May act as a fidelity factor of the translation reaction, by catalyzing a one-codon backward translocation of tRNAs on improperly translocated ribosomes. Back-translocation proceeds from a post-translocation (POST) complex to a pre-translocation (PRE) complex, thus giving elongation factor G a second chance to translocate the tRNAs correctly. Binds to ribosomes in a GTP-dependent manner. This chain is Elongation factor 4, found in Tropheryma whipplei (strain Twist) (Whipple's bacillus).